Consider the following 320-residue polypeptide: MPASLLELKKRIASVKQTSKITEAMHMVSAAKLNQTEKRDKGYQEYNRLLHQTVSRLMSASVINHLNKANYRLTQDNIDSIDYDDVFGMGIISDMIKPREEVHSVGYLVVTGDRGLVGSYNSSVIKQMMSLVADDKLQGRESKILSVGSVGSQFFKKNNLNVVYEKDGVSDVPTFKETLPIVSTAIKMYLNGVYDELYVCYTHHVNSLSSAFRAEKMLPIVDLDIGTMEAKESKKIEFEVAPDIDSVLATLLPQFARAEIYGAILDAKTAEHASSMTAMKSATDNAKDLVSSLSLQMNRARQAQITTELTEIVSGANALE.

It belongs to the ATPase gamma chain family. In terms of assembly, F-type ATPases have 2 components, CF(1) - the catalytic core - and CF(0) - the membrane proton channel. CF(1) has five subunits: alpha(3), beta(3), gamma(1), delta(1), epsilon(1). CF(0) has three main subunits: a, b and c.

Its subcellular location is the cell membrane. Produces ATP from ADP in the presence of a proton gradient across the membrane. The gamma chain is believed to be important in regulating ATPase activity and the flow of protons through the CF(0) complex. This Lactobacillus delbrueckii subsp. bulgaricus (strain ATCC 11842 / DSM 20081 / BCRC 10696 / JCM 1002 / NBRC 13953 / NCIMB 11778 / NCTC 12712 / WDCM 00102 / Lb 14) protein is ATP synthase gamma chain.